A 128-amino-acid chain; its full sequence is Aspartate 1-decarboxylase (128 aa).

Serine 25 serves as the catalytic Schiff-base intermediate with substrate; via pyruvic acid. Position 25 is a pyruvic acid (Ser) (serine 25). Threonine 57 serves as a coordination point for substrate. The active-site Proton donor is the tyrosine 58. 73-75 (GAA) contacts substrate.

The protein belongs to the PanD family. As to quaternary structure, heterooctamer of four alpha and four beta subunits. Pyruvate serves as cofactor. Is synthesized initially as an inactive proenzyme, which is activated by self-cleavage at a specific serine bond to produce a beta-subunit with a hydroxyl group at its C-terminus and an alpha-subunit with a pyruvoyl group at its N-terminus.

The protein localises to the cytoplasm. The catalysed reaction is L-aspartate + H(+) = beta-alanine + CO2. The protein operates within cofactor biosynthesis; (R)-pantothenate biosynthesis; beta-alanine from L-aspartate: step 1/1. Its function is as follows. Catalyzes the pyruvoyl-dependent decarboxylation of aspartate to produce beta-alanine. The sequence is that of Aspartate 1-decarboxylase from Caldicellulosiruptor bescii (strain ATCC BAA-1888 / DSM 6725 / KCTC 15123 / Z-1320) (Anaerocellum thermophilum).